The primary structure comprises 316 residues: ATP synthase gamma chain (316 aa).

It belongs to the ATPase gamma chain family. As to quaternary structure, F-type ATPases have 2 components, CF(1) - the catalytic core - and CF(0) - the membrane proton channel. CF(1) has five subunits: alpha(3), beta(3), gamma(1), delta(1), epsilon(1). CF(0) has three main subunits: a, b and c.

Its subcellular location is the cellular thylakoid membrane. In terms of biological role, produces ATP from ADP in the presence of a proton gradient across the membrane. The gamma chain is believed to be important in regulating ATPase activity and the flow of protons through the CF(0) complex. This Prochlorococcus marinus (strain MIT 9211) protein is ATP synthase gamma chain.